We begin with the raw amino-acid sequence, 256 residues long: Global transcriptional regulator CodY (256 aa).

A GAF domain region spans residues M1 to L155. Positions A203–R222 form a DNA-binding region, H-T-H motif.

The protein belongs to the CodY family.

It is found in the cytoplasm. Functionally, DNA-binding global transcriptional regulator which is involved in the adaptive response to starvation and acts by directly or indirectly controlling the expression of numerous genes in response to nutrient availability. During rapid exponential growth, CodY is highly active and represses genes whose products allow adaptation to nutrient depletion. In Staphylococcus epidermidis (strain ATCC 35984 / DSM 28319 / BCRC 17069 / CCUG 31568 / BM 3577 / RP62A), this protein is Global transcriptional regulator CodY.